The primary structure comprises 495 residues: Glucose-6-phosphate 1-dehydrogenase (495 aa).

An Isoglutamyl lysine isopeptide (Lys-Gln) (interchain with Q-Cter in protein Pup) cross-link involves residue Lys51. NADP(+) contacts are provided by residues 94-95 (DL) and Lys154. Residues His184, Lys188, Glu222, and Asp241 each coordinate substrate. The Proton acceptor role is filled by His246. Lys345 provides a ligand contact to substrate.

It belongs to the glucose-6-phosphate dehydrogenase family.

The catalysed reaction is D-glucose 6-phosphate + NADP(+) = 6-phospho-D-glucono-1,5-lactone + NADPH + H(+). It participates in carbohydrate degradation; pentose phosphate pathway; D-ribulose 5-phosphate from D-glucose 6-phosphate (oxidative stage): step 1/3. Catalyzes the oxidation of glucose 6-phosphate to 6-phosphogluconolactone. The chain is Glucose-6-phosphate 1-dehydrogenase from Mycolicibacterium smegmatis (strain ATCC 700084 / mc(2)155) (Mycobacterium smegmatis).